The sequence spans 599 residues: Adenine deaminase (599 aa).

The tract at residues 1 to 31 (MARSNRRGGRGDPEDDPAWAPPGHRCAGERA) is disordered.

Belongs to the metallo-dependent hydrolases superfamily. Adenine deaminase family. Mn(2+) serves as cofactor.

The catalysed reaction is adenine + H2O + H(+) = hypoxanthine + NH4(+). The sequence is that of Adenine deaminase from Methanopyrus kandleri (strain AV19 / DSM 6324 / JCM 9639 / NBRC 100938).